The chain runs to 693 residues: DNA ligase (693 aa).

NAD(+)-binding positions include 40–44 (DSEYD), 89–90 (SL), and Glu121. The active-site N6-AMP-lysine intermediate is the Lys123. Residues Arg144, Glu179, Lys295, and Lys319 each contribute to the NAD(+) site. Residues Cys413, Cys416, Cys431, and Cys437 each coordinate Zn(2+). The BRCT domain occupies 610–693 (REQNILTGKI…AFIKCLEKEV (84 aa)).

Belongs to the NAD-dependent DNA ligase family. LigA subfamily. Requires Mg(2+) as cofactor. It depends on Mn(2+) as a cofactor.

The catalysed reaction is NAD(+) + (deoxyribonucleotide)n-3'-hydroxyl + 5'-phospho-(deoxyribonucleotide)m = (deoxyribonucleotide)n+m + AMP + beta-nicotinamide D-nucleotide.. In terms of biological role, DNA ligase that catalyzes the formation of phosphodiester linkages between 5'-phosphoryl and 3'-hydroxyl groups in double-stranded DNA using NAD as a coenzyme and as the energy source for the reaction. It is essential for DNA replication and repair of damaged DNA. This is DNA ligase from Rickettsia typhi (strain ATCC VR-144 / Wilmington).